The following is a 27-amino-acid chain: Phospholipase A2 P-elapitoxin-Aa1a alpha chain (27 aa).

This sequence belongs to the phospholipase A2 family. Group I subfamily. As to quaternary structure, heterotrimer of alpha, beta and gamma chains, each related to PLA2. Ca(2+) serves as cofactor. In terms of tissue distribution, expressed by the venom gland.

Its subcellular location is the secreted. It catalyses the reaction a 1,2-diacyl-sn-glycero-3-phosphocholine + H2O = a 1-acyl-sn-glycero-3-phosphocholine + a fatty acid + H(+). Functionally, heterotrimer: presynaptic neurotoxin. Inhibits nerve-evoked twitch contractions but not responses to cholinergic agonists acetylcholine and carbachol and to depolarizing agonist KCl. Causes a fade in tetanic contractions. Displays a triphasic mode of action with depression, enhancement and blockade of neurotransmission. Does not display myotoxic activity such as changes in baseline muscle tension or inhibition of directly stimulated muscle twitches. All subunits are necessary for maximum toxicity. Monomer: Snake venom phospholipase A2 (PLA2) alpha chain that has enzymatic activity. PLA2 catalyzes the calcium-dependent hydrolysis of the 2-acyl groups in 3-sn-phosphoglycerides. This chain is Phospholipase A2 P-elapitoxin-Aa1a alpha chain, found in Acanthophis antarcticus (Common death adder).